The chain runs to 206 residues: Guanylate kinase (206 aa).

Residues 4 to 182 form the Guanylate kinase-like domain; the sequence is ANLFIISAPS…AVQNLIHIIS (179 aa). 11-18 contributes to the ATP binding site; it reads APSGAGKT.

This sequence belongs to the guanylate kinase family.

Its subcellular location is the cytoplasm. The enzyme catalyses GMP + ATP = GDP + ADP. In terms of biological role, essential for recycling GMP and indirectly, cGMP. This chain is Guanylate kinase, found in Coxiella burnetii (strain RSA 493 / Nine Mile phase I).